We begin with the raw amino-acid sequence, 1156 residues long: Reverse gyrase 1 (1156 aa).

The RG N-terminal-type zinc finger occupies 1 to 38; the sequence is MLKVYYTFGCPNCGGPIDDEHLLAGVPCSKCLPGRVEN. Zn(2+) contacts are provided by C10, C13, C28, and C31. ATP-binding positions include Q86 and 103–110; that span reads APTGLGKT. Positions 90–277 constitute a Helicase ATP-binding domain; that stretch reads IKRLAKSESF…ALRTLIGFEP (188 aa). Positions 184–187 match the DEAD box motif; it reads DDSD. Residues 570-1156 are topoisomerase I; the sequence is INIKTILLIV…VNSLKLDTNV (587 aa). The region spanning 574 to 736 is the Toprim domain; sequence TILLIVESPT…NIYRIKYHEI (163 aa). E580 is a binding site for Mg(2+). The RG C-terminal-type zinc finger occupies 655–682; the sequence is IYKCYNCGKTFTIKSNTCPYCGSVFISS. Residues C658, C661, C672, and C675 each coordinate Zn(2+). A Mg(2+)-binding site is contributed by D705. The region spanning 752-1143 is the Topo IA-type catalytic domain; that stretch reads NMNLVKSQIV…DLHKEITQIS (392 aa). The active-site O-(5'-phospho-DNA)-tyrosine intermediate is Y895.

This sequence in the N-terminal section; belongs to the DEAD box helicase family. DDVD subfamily. It in the C-terminal section; belongs to the type IA topoisomerase family. Monomer. Requires Zn(2+) as cofactor. Mg(2+) is required as a cofactor.

Its subcellular location is the cytoplasm. The enzyme catalyses ATP + H2O = ADP + phosphate + H(+). In terms of biological role, modifies the topological state of DNA by introducing positive supercoils in an ATP-dependent process, increasing the linking number in steps of +1. Binds to single-stranded DNA, transiently cleaves and then rejoins the ends, introducing a positive supercoil in the process. The scissile phosphodiester is attacked by the catalytic tyrosine of the enzyme, resulting in the formation of a DNA-(5'-phosphotyrosyl)-enzyme intermediate. Probably involved in rewinding DNA strands in regions of the chromosome that have opened up to allow replication, transcription, DNA repair and/or for DNA protection. This Sulfurisphaera tokodaii (strain DSM 16993 / JCM 10545 / NBRC 100140 / 7) (Sulfolobus tokodaii) protein is Reverse gyrase 1.